Consider the following 236-residue polypeptide: 1-(5-phosphoribosyl)-5-[(5-phosphoribosylamino)methylideneamino] imidazole-4-carboxamide isomerase (236 aa).

The active-site Proton acceptor is Asp8. Catalysis depends on Asp129, which acts as the Proton donor.

Belongs to the HisA/HisF family.

Its subcellular location is the cytoplasm. The catalysed reaction is 1-(5-phospho-beta-D-ribosyl)-5-[(5-phospho-beta-D-ribosylamino)methylideneamino]imidazole-4-carboxamide = 5-[(5-phospho-1-deoxy-D-ribulos-1-ylimino)methylamino]-1-(5-phospho-beta-D-ribosyl)imidazole-4-carboxamide. It participates in amino-acid biosynthesis; L-histidine biosynthesis; L-histidine from 5-phospho-alpha-D-ribose 1-diphosphate: step 4/9. In Methanocorpusculum labreanum (strain ATCC 43576 / DSM 4855 / Z), this protein is 1-(5-phosphoribosyl)-5-[(5-phosphoribosylamino)methylideneamino] imidazole-4-carboxamide isomerase.